A 98-amino-acid polypeptide reads, in one-letter code: Conotoxin Di19A (98 aa).

A signal peptide spans 1–19; sequence MSTLGILLPIALLLPLANP. Residues 20-49 constitute a propeptide that is removed on maturation; that stretch reads AENGDGQAMPRTRNLRSLSFGRTLRRLEKR. Pro53 is subject to 4-hydroxyproline. At Glu63 the chain carries 4-carboxyglutamate. A 4-hydroxyproline mark is found at Pro68, Pro93, and Pro97.

Contains 5 disulfide bonds. Expressed by the venom duct.

It localises to the secreted. Injection of the synthetic peptide causes a hyperexcitable phenotype in mice greater than three weeks of age at lower doses, and lethargy at higher doses. The protein is Conotoxin Di19A of Conus distans (Distant cone).